A 104-amino-acid polypeptide reads, in one-letter code: MKASKISDSRLRGIDGTVDSPCRHCIARVVILAFLDWQANTKGSAKSGCLSSSSKLCTLFNISMDLSLAWRMVEFLLFDSEDKERNSASSCLCMESNPPVFMAI.

This is an uncharacterized protein from Saccharomyces cerevisiae (strain ATCC 204508 / S288c) (Baker's yeast).